A 461-amino-acid chain; its full sequence is Tip elongation protein 1 (461 aa).

Residues 22 to 69 (GEVENRKGVYVGLELLPEFAEFGKNRGVVDGREYFKTKNNEKTGIFVP) form the CAP-Gly domain. Ser82, Ser84, Ser289, Ser294, and Ser305 each carry phosphoserine. A coiled-coil region spans residues 134-418 (TEKILQKRIE…RMSPAEFELE (285 aa)). Positions 278–303 (KANSSTANEKLSHMESSSPTLTNASF) are enriched in polar residues. The disordered stretch occupies residues 278–323 (KANSSTANEKLSHMESSSPTLTNASFESPKRGKGSNDLPENHPQRR). Thr367 is modified (phosphothreonine). A disordered region spans residues 417–437 (LETTQEVEENDSDSHDDEETW).

As to quaternary structure, monomer. Interacts with tea1 and tea2. Interacts with tea4 in the presence of tea1.

The protein resides in the cytoplasm. It is found in the cytoskeleton. Has a role in stabilizing and targeting the growing tips of the microtubules along the long axis of the cell, directing them to the ends of the cell. Acts as a cargo for tea2. This Schizosaccharomyces pombe (strain 972 / ATCC 24843) (Fission yeast) protein is Tip elongation protein 1 (tip1).